A 30-amino-acid chain; its full sequence is Trypsin inhibitor 3 (30 aa).

3 cysteine pairs are disulfide-bonded: C4-C21, C11-C23, and C17-C29.

It belongs to the protease inhibitor I7 (squash-type serine protease inhibitor) family.

Its subcellular location is the secreted. Functionally, inhibits trypsin. In Momordica charantia (Bitter gourd), this protein is Trypsin inhibitor 3.